The chain runs to 197 residues: Adenylyl-sulfate kinase (197 aa).

33–40 (GLSGSGKS) provides a ligand contact to ATP. The active-site Phosphoserine intermediate is the serine 107.

It belongs to the APS kinase family.

The enzyme catalyses adenosine 5'-phosphosulfate + ATP = 3'-phosphoadenylyl sulfate + ADP + H(+). It participates in sulfur metabolism; hydrogen sulfide biosynthesis; sulfite from sulfate: step 2/3. In terms of biological role, catalyzes the synthesis of activated sulfate. This chain is Adenylyl-sulfate kinase, found in Bacillus licheniformis (strain ATCC 14580 / DSM 13 / JCM 2505 / CCUG 7422 / NBRC 12200 / NCIMB 9375 / NCTC 10341 / NRRL NRS-1264 / Gibson 46).